The sequence spans 622 residues: Palmitoyltransferase ZDHHC17 (622 aa).

Residues 1-294 (MADGPDEYDT…LKADKEFRQK (294 aa)) lie on the Cytoplasmic side of the membrane. The tract at residues 1–295 (MADGPDEYDT…KADKEFRQKV (295 aa)) is necessary and sufficient for interaction with DNAJC5 and SNAP25. 7 ANK repeats span residues 41–76 (THVDDYSTWDIVKATQYGIYERCRELVEAGYDVRQP), 79–108 (ENVTLLHWAAINNRIDLVKYYISKGAIVDQ), 113–142 (LNSTPLHWATRQGHLSMVVQLMKYGADPSL), 146–175 (EGCSCIHLAAQFGHTSIVAYLIAKGQDVDM), 179–209 (NGMTPLMWAAYRTHSVDPTRLLLTFNVSVNL), 214–243 (HKNTALHWAVLAGNTTVISLLLEAGGNVDA), and 247–276 (KGESALDLAKQRKNVWMINHLQEARQAKGY). A run of 2 helical transmembrane segments spans residues 295-315 (VMLGTPFLVIWLVGFIADLNI) and 316-336 (DSWLIKGLMYGGVWATVQFLS). Topologically, residues 337-347 (KSFFDHSMHSA) are lumenal. Residues 348–368 (LPLGIYLATKFWMYVTWFFWF) traverse the membrane as a helical segment. Residues 369–371 (WND) lie on the Cytoplasmic side of the membrane. A helical membrane pass occupies residues 372 to 392 (LSFLSIHLPFLANSVALFYNF). Residues 393 to 470 (GKSWKSDPGI…GNCVGAGNHR (78 aa)) are Lumenal-facing. The DHHC domain maps to 427–477 (IFCSTCLIRKPVRSKHCGVCNRCIAKFDHHCPWVGNCVGAGNHRYFMGYLF). Residue Cys457 is the S-palmitoyl cysteine intermediate of the active site. A helical transmembrane segment spans residues 471-491 (YFMGYLFFLLFMICWMIYGCV). Residues 492–506 (SYWGLHCETTYTKDG) lie on the Cytoplasmic side of the membrane. A helical membrane pass occupies residues 507-526 (FWTYITQIATCSPWMFWMFL). The Lumenal portion of the chain corresponds to 527 to 529 (NSV). A helical transmembrane segment spans residues 530–552 (FHFMWVAVLLMCQMYQITCLGIT). Residues 553-622 (TNERMNARRY…QISGSGYQLV (70 aa)) lie on the Cytoplasmic side of the membrane.

Belongs to the DHHC palmitoyltransferase family. AKR/ZDHHC17 subfamily. Interacts (via ANK repeats) with numerous proteins (via the consensus sequence motif [VIAP]-[VIT]-x-x-Q-P). Interacts (via ANK repeats) with CLIP3. Interacts (via ANK repeats) with HTT. Interacts (via ANK repeats) with DNAJC5 (via C-terminus). Interacts (via ANK repeats) with MAP6. Interacts (via ANK repeats) with SNAP23. Interacts (via ANK repeats) with SNAP25. Interacts (via ANK repeats) with EVL. Interacts with SPRED1 and SPRED3. Interacts with GPM6A and OPTN. May interact (via ANK repeats) with SPRED2. May interact with NTRK1; may regulate its localization and function. In terms of processing, autopalmitoylated. Autopalmitoylation has a regulatory role in ZDHHC17-mediated Mg(2+) transport.

It localises to the golgi apparatus membrane. The protein resides in the cytoplasmic vesicle membrane. The protein localises to the presynaptic cell membrane. It carries out the reaction L-cysteinyl-[protein] + hexadecanoyl-CoA = S-hexadecanoyl-L-cysteinyl-[protein] + CoA. The enzyme catalyses L-cysteinyl-[protein] + tetradecanoyl-CoA = S-tetradecanoyl-L-cysteinyl-[protein] + CoA. The catalysed reaction is L-cysteinyl-[protein] + octadecanoyl-CoA = S-octadecanoyl-L-cysteinyl-[protein] + CoA. Its function is as follows. Palmitoyltransferase that catalyzes the addition of palmitate onto various protein substrates and is involved in a variety of cellular processes. Has no stringent fatty acid selectivity and in addition to palmitate can also transfer onto target proteins myristate from tetradecanoyl-CoA and stearate from octadecanoyl-CoA. Palmitoyltransferase specific for a subset of neuronal proteins, including SNAP25, DLG4/PSD95, GAD2, SYT1 and HTT. Also palmitoylates neuronal protein GPM6A as well as SPRED1 and SPRED3. Could also play a role in axonogenesis through the regulation of NTRK1 and the downstream ERK1/ERK2 signaling cascade. May be involved in the sorting or targeting of critical proteins involved in the initiating events of endocytosis at the plasma membrane. May play a role in Mg(2+) transport. Could also palmitoylate DNAJC5 and regulate its localization to the Golgi membrane. Palmitoylates CASP6, thereby preventing its dimerization and subsequent activation. This Rattus norvegicus (Rat) protein is Palmitoyltransferase ZDHHC17.